The following is a 613-amino-acid chain: DNA repair and telomere maintenance protein nbs1 (613 aa).

An FHA domain is found at tyrosine 23–valine 86. BRCT domains are found at residues phenylalanine 107–threonine 186 and glycine 228–isoleucine 302. Phosphoserine is present on serine 355. Disordered regions lie at residues lysine 381–lysine 428 and threonine 546–phenylalanine 613. Residues leucine 387–lysine 399 are compositionally biased toward polar residues. Residues lysine 400 to lysine 409 are compositionally biased toward basic and acidic residues. Residues serine 574–lysine 592 are compositionally biased toward low complexity. The FxF/Y motif motif lies at phenylalanine 611–phenylalanine 613.

This sequence belongs to the Nibrin family. Component of the MRN complex composed of two heterodimers rad32 and rad50 associated with a single nbs1. Interacts with (phosphorylated) ctp1/CtIP. Interacts (via FxF/Y motif) with tel1/atm.

Its subcellular location is the nucleus. The protein localises to the chromosome. The protein resides in the telomere. Its function is as follows. Component of the MRN complex, which plays a central role in double-strand break (DSB) repair, DNA recombination, maintenance of telomere integrity and meiosis. The MRN complex is involved in the repair of DNA double-strand breaks (DSBs) via homologous recombination (HR), an error-free mechanism which primarily occurs during S and G2 phases. The complex (1) mediates the end resection of damaged DNA, which generates proper single-stranded DNA, a key initial steps in HR, and is (2) required for the recruitment of other repair factors and efficient activation of tel1/atm upon DNA damage. The MRN complex possesses single-strand endonuclease activity and double-strand-specific 3'-5' exonuclease activity, which are provided by MRE11, to initiate end resection, which is required for single-strand invasion and recombination. Within the MRN complex, nbs1 acts as a protein-protein adapter, which specifically recognizes and binds phosphorylated proteins, promoting their recruitment to DNA damage sites. Recruits rad32 and rad50 components of the MRN complex to DSBs in response to DNA damage. Promotes the recruitment of tel1/atm to the DNA damage sites, activating tel1/atm function. Mediates the recruitment of phosphorylated ctp1/CtIP to DSBs, leading to cooperation between the MRN complex and ctp1/CtIP to initiate end resection. The protein is DNA repair and telomere maintenance protein nbs1 of Schizosaccharomyces pombe (strain 972 / ATCC 24843) (Fission yeast).